We begin with the raw amino-acid sequence, 681 residues long: MSEPRQILVTSALPYANGSIHLGHMLEYIQTDMWVRFQKLRGNQCIYVCADDAHGSAIMLRAEKEGITPEQLIANVQAEHSSDFADFLVDFDNFHSTHSEENRELSSLIYSRLRDAGHIATRSVTQYFDPEKGMFLADRFIKGTCPKCAAEDQYGDNCEKCGATYAPTELKNPKSAISGATPVLRDSQHFFFKLPDFQAMLQQWTRSGTLQDAVANKLAEWLDSGLQEWDISRDAPYFGFEIPGEPGKYFYVWLDAPIGYMASFKNLCARRPELDFDAFWNKDSKAELYHFIGKDIVNFHALFWPAMLEGAGLRKPTAVNVHGYLTVNGAKMSKSRGTFIKARTYLDHLQPEYLRYYYAAKLGRGVDDLDLNLEDFVQKVNSDLVGKVVNIASRCAGFIHKGNDGVMVAGDAAPELTEAFLAAAPGIAEAYEARDFGRAMREIMALADRANAWIADKAPWSLAKQEGKQDEVQAICAQGINLFRQLMIFLKPVLPVLAADAEAFLNVAPLTWSDHLSRLENHKLNPFKPLMSRIEPARVEAMIAASKEDLLAAEGQAQAPVGNGELAKDPLSAEIEFDTFAAVDLRVALIVKAEAVPGADKLLQLTLDIGDEQRNVFSGIKSAYPDPSRLEGRLTMMVANLKPRKMRFGVSEGMVMAAGPGGEEIYLLSPDSGAKPGQRIK.

Positions 14–24 match the 'HIGH' region motif; that stretch reads PYANGSIHLGH. 4 residues coordinate Zn(2+): Cys145, Cys148, Cys158, and Cys161. Positions 331–335 match the 'KMSKS' region motif; it reads KMSKS. Residue Lys334 coordinates ATP. In terms of domain architecture, tRNA-binding spans 579–681; sequence TFAAVDLRVA…SGAKPGQRIK (103 aa).

Belongs to the class-I aminoacyl-tRNA synthetase family. MetG type 1 subfamily. As to quaternary structure, homodimer. The cofactor is Zn(2+).

The protein localises to the cytoplasm. The enzyme catalyses tRNA(Met) + L-methionine + ATP = L-methionyl-tRNA(Met) + AMP + diphosphate. In terms of biological role, is required not only for elongation of protein synthesis but also for the initiation of all mRNA translation through initiator tRNA(fMet) aminoacylation. This Pseudomonas putida (strain W619) protein is Methionine--tRNA ligase.